The chain runs to 337 residues: UDP-3-O-acylglucosamine N-acyltransferase (337 aa).

Catalysis depends on His-238, which acts as the Proton acceptor.

Belongs to the transferase hexapeptide repeat family. LpxD subfamily. Homotrimer.

It catalyses the reaction a UDP-3-O-[(3R)-3-hydroxyacyl]-alpha-D-glucosamine + a (3R)-hydroxyacyl-[ACP] = a UDP-2-N,3-O-bis[(3R)-3-hydroxyacyl]-alpha-D-glucosamine + holo-[ACP] + H(+). Its pathway is bacterial outer membrane biogenesis; LPS lipid A biosynthesis. Functionally, catalyzes the N-acylation of UDP-3-O-acylglucosamine using 3-hydroxyacyl-ACP as the acyl donor. Is involved in the biosynthesis of lipid A, a phosphorylated glycolipid that anchors the lipopolysaccharide to the outer membrane of the cell. This chain is UDP-3-O-acylglucosamine N-acyltransferase, found in Xanthomonas oryzae pv. oryzae (strain KACC10331 / KXO85).